A 120-amino-acid chain; its full sequence is Large ribosomal subunit protein uL18c (120 aa).

It belongs to the universal ribosomal protein uL18 family. Part of the 50S ribosomal subunit; contacts the 5S rRNA.

It localises to the plastid. The protein resides in the chloroplast. In terms of biological role, binds 5S rRNA, forms part of the central protuberance of the 50S subunit. This is Large ribosomal subunit protein uL18c (rpl18) from Pyropia yezoensis (Susabi-nori).